The chain runs to 40 residues: NLVQFGFMIECAIRNRQPALDFMNYGCYCGTVGRGTPVDD.

Heterotrimer of alpha, beta, and gamma chains; non-covalently linked. As to expression, expressed by the venom gland.

It localises to the secreted. Functionally, heterotrimer: Snake venom phospholipase A2 (PLA2) heterotrimer that acts as a potent presynaptic neurotoxin by blocking synaptic transmission and synaptic vesicle recycling. Enzymatic activity is essential for the neurotoxic effects. May act by binding in a calcium-dependent fashion to neurotonal pentraxin-1 (NPTX1) and neurotonal pentraxin-2 (NPTX2), but not to neuronal pentraxin receptor (NPTXR). Also binds to taipoxin-associated calcium binding protein 49 (RCN2), a protein localized in the lumen of endoplasmic reticulum. Monomer (beta chain): Snake venom phospholipase A2 homolog that is neither toxic nor enzymatically active. Does not bind calcium. This chain is Neutral phospholipase A2 homolog cannitoxin beta chain 2, found in Oxyuranus scutellatus canni (Papuan taipan).